Reading from the N-terminus, the 553-residue chain is Glycerol-3-phosphate dehydrogenase (553 aa).

13–41 (DLIVIGGGINGVGTARDGALRGLKTLLIE) serves as a coordination point for FAD.

Belongs to the FAD-dependent glycerol-3-phosphate dehydrogenase family. FAD serves as cofactor.

Its subcellular location is the cytoplasm. The enzyme catalyses a quinone + sn-glycerol 3-phosphate = dihydroxyacetone phosphate + a quinol. This is Glycerol-3-phosphate dehydrogenase (glpD) from Synechocystis sp. (strain ATCC 27184 / PCC 6803 / Kazusa).